Here is a 222-residue protein sequence, read N- to C-terminus: Cytidylate kinase (222 aa).

10–18 (GPSASGKGT) is an ATP binding site.

The protein belongs to the cytidylate kinase family. Type 1 subfamily.

It localises to the cytoplasm. It carries out the reaction CMP + ATP = CDP + ADP. The catalysed reaction is dCMP + ATP = dCDP + ADP. The protein is Cytidylate kinase of Chromobacterium violaceum (strain ATCC 12472 / DSM 30191 / JCM 1249 / CCUG 213 / NBRC 12614 / NCIMB 9131 / NCTC 9757 / MK).